We begin with the raw amino-acid sequence, 224 residues long: UPF0173 metal-dependent hydrolase EF_1371 (224 aa).

This sequence belongs to the UPF0173 family.

This Enterococcus faecalis (strain ATCC 700802 / V583) protein is UPF0173 metal-dependent hydrolase EF_1371.